A 314-amino-acid polypeptide reads, in one-letter code: Regulator of microtubule dynamics protein 1 (314 aa).

Lysine 165 is modified (N6-succinyllysine). 2 TPR repeats span residues 168–204 and 222–258; these read AICL…NPKD and PWYQ…DPNF.

This sequence belongs to the RMDN family. In terms of assembly, interacts with microtubules.

The protein resides in the cytoplasm. Its subcellular location is the cytoskeleton. The protein localises to the spindle. It localises to the spindle pole. This chain is Regulator of microtubule dynamics protein 1 (RMDN1), found in Pongo abelii (Sumatran orangutan).